We begin with the raw amino-acid sequence, 552 residues long: Putative transport protein HAPS_0158 (552 aa).

A run of 5 helical transmembrane segments spans residues 4–24 (IALTVSLLSLVAVIGLWIGHI), 28–48 (GVSLGIGGVLFGGILVSHFMT), 65–85 (FGLILFVYTIGIQVGPGFFAS), 95–115 (AFAVMIVGISGILVILLHKIF), and 157–177 (MGYAIAYPFGIIGILLAMWLI). 2 consecutive RCK C-terminal domains span residues 193 to 275 (DSAT…ILGE) and 277 to 360 (VNVS…IIGN). The next 6 helical transmembrane spans lie at 370–390 (MLPIFIGVGLGVLLGSIPIYL), 393–413 (FPVALKLGLAGGPLVVALILA), 438–458 (IVLFLAVVGWKAGGNFLNTLL), 463–483 (LAWIGYGAIITFVPLIVTGLV), 492–512 (YLSLCGLLAGSMTDPPALAFA), and 532–552 (LVMFCRIILPQILAILLWVAG).

The protein belongs to the AAE transporter (TC 2.A.81) family. YidE subfamily.

The protein resides in the cell membrane. This is Putative transport protein HAPS_0158 from Glaesserella parasuis serovar 5 (strain SH0165) (Haemophilus parasuis).